The sequence spans 157 residues: Transcription elongation factor GreA (157 aa).

The protein belongs to the GreA/GreB family.

Functionally, necessary for efficient RNA polymerase transcription elongation past template-encoded arresting sites. The arresting sites in DNA have the property of trapping a certain fraction of elongating RNA polymerases that pass through, resulting in locked ternary complexes. Cleavage of the nascent transcript by cleavage factors such as GreA or GreB allows the resumption of elongation from the new 3'terminus. GreA releases sequences of 2 to 3 nucleotides. The protein is Transcription elongation factor GreA of Brucella abortus (strain S19).